We begin with the raw amino-acid sequence, 63 residues long: Parvalbumin alpha (63 aa).

EF-hand domains are found at residues 28–38 and 39–63; these read IEEEELGLILK and VLLAAGDKDGDGKIGVDEFVTLVSE. Residues glutamate 29, glutamate 32, aspartate 45, aspartate 47, aspartate 49, lysine 51, and glutamate 56 each coordinate Ca(2+).

Detected in muscle and cutaneous mucus. In the skin, detected in cells in the basal region of the glandular epithelium of the dermal mucus glands (at protein level).

The protein resides in the cytoplasm. Its subcellular location is the secreted. In muscle, parvalbumin is thought to be involved in relaxation after contraction. It binds two calcium ions. The sequence is that of Parvalbumin alpha from Rana temporaria (European common frog).